The sequence spans 219 residues: UPF0173 metal-dependent hydrolase Mlab_1154 (219 aa).

The protein belongs to the UPF0173 family.

In Methanocorpusculum labreanum (strain ATCC 43576 / DSM 4855 / Z), this protein is UPF0173 metal-dependent hydrolase Mlab_1154.